Here is a 102-residue protein sequence, read N- to C-terminus: NADH-quinone oxidoreductase subunit K (102 aa).

3 consecutive transmembrane segments (helical) span residues 5-25 (IAHYLTVSAILFTLGVFGIFL), 31-51 (IVILMSIELILLSVNLNFVAF), and 66-86 (FVLTVAAAEAAIGLAILVVFF).

This sequence belongs to the complex I subunit 4L family. In terms of assembly, NDH-1 is composed of 14 different subunits. Subunits NuoA, H, J, K, L, M, N constitute the membrane sector of the complex.

The protein localises to the cell inner membrane. It carries out the reaction a quinone + NADH + 5 H(+)(in) = a quinol + NAD(+) + 4 H(+)(out). NDH-1 shuttles electrons from NADH, via FMN and iron-sulfur (Fe-S) centers, to quinones in the respiratory chain. The immediate electron acceptor for the enzyme in this species is believed to be ubiquinone. Couples the redox reaction to proton translocation (for every two electrons transferred, four hydrogen ions are translocated across the cytoplasmic membrane), and thus conserves the redox energy in a proton gradient. This Brucella abortus (strain S19) protein is NADH-quinone oxidoreductase subunit K.